A 90-amino-acid polypeptide reads, in one-letter code: uncharacterized protein (90 aa).

The helical transmembrane segment at 46 to 62 (MALLVVFLVSLFACTTI) threads the bilayer.

The protein localises to the membrane. This is an uncharacterized protein from Haemophilus influenzae (strain ATCC 51907 / DSM 11121 / KW20 / Rd).